The primary structure comprises 180 residues: Large ribosomal subunit protein uL16 (180 aa).

The protein belongs to the universal ribosomal protein uL16 family.

The chain is Large ribosomal subunit protein uL16 from Thermococcus sibiricus (strain DSM 12597 / MM 739).